A 911-amino-acid polypeptide reads, in one-letter code: Protein dead ringer (911 aa).

3 disordered regions span residues 1-44 (MQLR…DCDS), 67-87 (SGGGGSFASPEPQTELPLSHH), and 172-274 (HVTS…QNNG). A compositionally biased stretch (basic and acidic residues) spans 19–34 (IERDSDLGDDLSHGDR). Ser-30 is subject to Phosphoserine. Phosphothreonine is present on Thr-35. Ser-44 carries the post-translational modification Phosphoserine. Positions 174–201 (TSSPSGGNGSSYNGGTTPTNSSNSNATT) are enriched in low complexity. The segment covering 202–231 (NGGGTAGPGGTGGSGGGGGGGGGGGGGVGG) has biased composition (gly residues). Residues 252–273 (AANSASNSSTSSEASNSSQQNN) show a composition bias toward low complexity. The region spanning 293–385 (DPKRKEFLDD…YLYPYECEKK (93 aa)) is the ARID domain. 3 disordered regions span residues 501–633 (GMPP…VGSG), 662–775 (PSMG…GKLN), and 826–877 (QSET…DQDM). Residues 512 to 550 (HQQQHSQQQQQQQHHHQQQQQQQSQQQHHLQQQRQRSQS) show a composition bias toward low complexity. Over residues 570-600 (HNNNSPPGSAHTSPQQREALNLSDSPPNLTN) the composition is skewed to polar residues. A phosphoserine mark is found at Ser-592 and Ser-594. Over residues 601-621 (IKREREREPTPEPVDQDDKFV) the composition is skewed to basic and acidic residues. Ser-720 is subject to Phosphoserine. The REKLES domain maps to 731 to 825 (TTGGSVGHRH…GVLVANVPLS (95 aa)). Basic residues predominate over residues 737 to 751 (GHRHSSPVSTKKKGG). Acidic residues predominate over residues 841–853 (TVEEEKDEEEEEE). Basic and acidic residues predominate over residues 854–870 (PKAAEEESHRSPVKQEN).

As to expression, present in the pharyngeal muscles, hindgut epithelium, amnioserosa, ring gland, midgut-hindgut junction, posterior region of each brain lobe, longitudinal glial cells of the CNS and the salivary gland duct of germ-band retracted embryos.

The protein resides in the nucleus. Transcription factor which is a downstream target of gcm and repo. Directly or indirectly activates the transcription of locos and pros, which are essential for the development of some glial cells. Plays an essential role in defining the cell shape and migration characteristics of longitudinal glia that enable them to establish a normal axon scaffold. The polypeptide is Protein dead ringer (retn) (Drosophila melanogaster (Fruit fly)).